A 252-amino-acid polypeptide reads, in one-letter code: 5'-nucleotidase SurE (252 aa).

A divalent metal cation is bound by residues aspartate 8, aspartate 9, serine 39, and asparagine 95.

This sequence belongs to the SurE nucleotidase family. A divalent metal cation is required as a cofactor.

The protein localises to the cytoplasm. The catalysed reaction is a ribonucleoside 5'-phosphate + H2O = a ribonucleoside + phosphate. Functionally, nucleotidase that shows phosphatase activity on nucleoside 5'-monophosphates. The sequence is that of 5'-nucleotidase SurE from Clostridium botulinum (strain 657 / Type Ba4).